Reading from the N-terminus, the 376-residue chain is Ribosomal RNA large subunit methyltransferase G (376 aa).

This sequence belongs to the methyltransferase superfamily. RlmG family.

Its subcellular location is the cytoplasm. It carries out the reaction guanosine(1835) in 23S rRNA + S-adenosyl-L-methionine = N(2)-methylguanosine(1835) in 23S rRNA + S-adenosyl-L-homocysteine + H(+). Specifically methylates the guanine in position 1835 (m2G1835) of 23S rRNA. The sequence is that of Ribosomal RNA large subunit methyltransferase G from Cronobacter sakazakii (strain ATCC BAA-894) (Enterobacter sakazakii).